Here is a 449-residue protein sequence, read N- to C-terminus: Glucose-6-phosphate isomerase 1 (449 aa).

Residue T38 is modified to Phosphothreonine. E290 acts as the Proton donor in catalysis. Residues H311 and K425 contribute to the active site.

Belongs to the GPI family. As to quaternary structure, homodimer.

It localises to the cytoplasm. The enzyme catalyses alpha-D-glucose 6-phosphate = beta-D-fructose 6-phosphate. The protein operates within carbohydrate biosynthesis; gluconeogenesis. It functions in the pathway carbohydrate degradation; glycolysis; D-glyceraldehyde 3-phosphate and glycerone phosphate from D-glucose: step 2/4. Its function is as follows. Catalyzes the reversible isomerization of glucose-6-phosphate to fructose-6-phosphate. This is Glucose-6-phosphate isomerase 1 from Geobacillus stearothermophilus (Bacillus stearothermophilus).